The following is a 1102-amino-acid chain: PAN2-PAN3 deadenylation complex catalytic subunit PAN2 (1102 aa).

WD repeat units follow at residues 20-59, 104-144, and 269-308; these read DYPR…RYTA, DEME…IVKQ, and NVMS…HFTD. The interval 308-445 is linker; sequence DMAIPIEMPK…STDELESLKP (138 aa). The tract at residues 423 to 442 is disordered; sequence AVPDPKVEQVPESSTDELES. Residues 446-833 enclose the USP domain; it reads EAPPIYRNLE…LPAVLLFQVK (388 aa). The Exonuclease domain occupies 881 to 1054; the sequence is VGLDTEFVSL…EDARTALKLY (174 aa). Positions 884, 886, 993, and 1046 each coordinate a divalent metal cation.

The protein belongs to the peptidase C19 family. PAN2 subfamily. Forms a heterotrimer with an asymmetric homodimer of the regulatory subunit PAN3 to form the poly(A)-nuclease (PAN) deadenylation complex. It depends on a divalent metal cation as a cofactor.

It is found in the cytoplasm. The catalysed reaction is Exonucleolytic cleavage of poly(A) to 5'-AMP.. With respect to regulation, positively regulated by the regulatory subunit PAN3. Catalytic subunit of the poly(A)-nuclease (PAN) deadenylation complex, one of two cytoplasmic mRNA deadenylases involved in mRNA turnover. PAN specifically shortens poly(A) tails of RNA and the activity is stimulated by poly(A)-binding protein PAB1. PAN deadenylation is followed by rapid degradation of the shortened mRNA tails by the CCR4-NOT complex. Deadenylated mRNAs are then degraded by two alternative mechanisms, namely exosome-mediated 3'-5' exonucleolytic degradation, or deadenylation-dependent mRNA decaping and subsequent 5'-3' exonucleolytic degradation by XRN1. May also be involved in post-transcriptional maturation of mRNA poly(A) tails. The chain is PAN2-PAN3 deadenylation complex catalytic subunit PAN2 from Chaetomium globosum (strain ATCC 6205 / CBS 148.51 / DSM 1962 / NBRC 6347 / NRRL 1970) (Soil fungus).